The chain runs to 157 residues: MLKIQGVKHFEKSRFFPFFSQNIRSFKYLALIGLGSNIEPEKKRFDMLFRVMMDDKRFKILSTSPMLINEAFGFKEQKDFTNAVMLIQTNLHARALLKVLLYYEVKFKRKRTFKNAPRTLDLDLLYFSQKVKRDKWCEVPHKGAKERVSVILPLGMI.

This sequence belongs to the HPPK family.

The enzyme catalyses 6-hydroxymethyl-7,8-dihydropterin + ATP = (7,8-dihydropterin-6-yl)methyl diphosphate + AMP + H(+). It participates in cofactor biosynthesis; tetrahydrofolate biosynthesis; 2-amino-4-hydroxy-6-hydroxymethyl-7,8-dihydropteridine diphosphate from 7,8-dihydroneopterin triphosphate: step 4/4. Catalyzes the transfer of pyrophosphate from adenosine triphosphate (ATP) to 6-hydroxymethyl-7,8-dihydropterin, an enzymatic step in folate biosynthesis pathway. The chain is 2-amino-4-hydroxy-6-hydroxymethyldihydropteridine pyrophosphokinase (folK) from Campylobacter jejuni subsp. jejuni serotype O:2 (strain ATCC 700819 / NCTC 11168).